The following is a 299-amino-acid chain: Oxygen-dependent coproporphyrinogen-III oxidase (299 aa).

S92 is a binding site for substrate. Mn(2+) contacts are provided by H96 and H106. The active-site Proton donor is the H106. Substrate is bound at residue 108-110; it reads NVR. Mn(2+)-binding residues include H145 and H175. Positions 240–275 are important for dimerization; sequence YVEFNLVWDRGTLFGLQTGGRTESILMSMPPLVRWE. A substrate-binding site is contributed by 258 to 260; it reads GGR.

The protein belongs to the aerobic coproporphyrinogen-III oxidase family. In terms of assembly, homodimer. It depends on Mn(2+) as a cofactor.

Its subcellular location is the cytoplasm. It carries out the reaction coproporphyrinogen III + O2 + 2 H(+) = protoporphyrinogen IX + 2 CO2 + 2 H2O. Its pathway is porphyrin-containing compound metabolism; protoporphyrin-IX biosynthesis; protoporphyrinogen-IX from coproporphyrinogen-III (O2 route): step 1/1. Functionally, involved in the heme biosynthesis. Catalyzes the aerobic oxidative decarboxylation of propionate groups of rings A and B of coproporphyrinogen-III to yield the vinyl groups in protoporphyrinogen-IX. In Escherichia coli O127:H6 (strain E2348/69 / EPEC), this protein is Oxygen-dependent coproporphyrinogen-III oxidase.